The primary structure comprises 181 residues: Histone H1 (181 aa).

2 disordered regions span residues 1–23 (MTET…THPP) and 81–181 (TKGA…PKKK). The span at 8–19 (KPKKVSKPKAKP) shows a compositional bias: basic residues. Positions 20 to 94 (THPPTSVMVM…GASGSFKLAA (75 aa)) constitute an H15 domain. Composition is skewed to basic residues over residues 103-119 (AVAK…KAAA) and 145-181 (KPKK…PKKK).

Belongs to the histone H1/H5 family.

Its subcellular location is the nucleus. It is found in the chromosome. Histones H1 are necessary for the condensation of nucleosome chains into higher-order structures. This chain is Histone H1, found in Tigriopus californicus (Marine copepod).